Here is a 284-residue protein sequence, read N- to C-terminus: Putative ABC transporter ATP-binding protein PH1815 (284 aa).

The 241-residue stretch at 4–244 folds into the ABC transporter domain; that stretch reads IEVEDVSFRY…VEFLRTIGVK (241 aa). 38–45 contributes to the ATP binding site; that stretch reads GPSGSGKS.

The protein belongs to the ABC transporter superfamily.

The protein localises to the cell membrane. Probably part of an ABC transporter complex. Responsible for energy coupling to the transport system. This chain is Putative ABC transporter ATP-binding protein PH1815, found in Pyrococcus horikoshii (strain ATCC 700860 / DSM 12428 / JCM 9974 / NBRC 100139 / OT-3).